A 373-amino-acid chain; its full sequence is Chaperone protein DnaJ (373 aa).

One can recognise a J domain in the interval 4–68 (NYYQILGVSK…QTRAAYDRLG (65 aa)). Residues 136-214 (GIEKNISFSS…CHGMGRYHKQ (79 aa)) form a CR-type zinc finger. Residues C149, C152, C166, C169, C188, C191, C202, and C205 each contribute to the Zn(2+) site. CXXCXGXG motif repeat units lie at residues 149-156 (CDTCHGSG), 166-173 (CDACSGVG), 188-195 (CHKCQGNG), and 202-209 (CKKCHGMG).

The protein belongs to the DnaJ family. Homodimer. It depends on Zn(2+) as a cofactor.

Its subcellular location is the cytoplasm. Functionally, participates actively in the response to hyperosmotic and heat shock by preventing the aggregation of stress-denatured proteins and by disaggregating proteins, also in an autonomous, DnaK-independent fashion. Unfolded proteins bind initially to DnaJ; upon interaction with the DnaJ-bound protein, DnaK hydrolyzes its bound ATP, resulting in the formation of a stable complex. GrpE releases ADP from DnaK; ATP binding to DnaK triggers the release of the substrate protein, thus completing the reaction cycle. Several rounds of ATP-dependent interactions between DnaJ, DnaK and GrpE are required for fully efficient folding. Also involved, together with DnaK and GrpE, in the DNA replication of plasmids through activation of initiation proteins. This is Chaperone protein DnaJ from Rickettsia peacockii (strain Rustic).